The sequence spans 535 residues: Glutamate--cysteine ligase (535 aa).

This sequence belongs to the glutamate--cysteine ligase type 1 family. Type 1 subfamily.

The catalysed reaction is L-cysteine + L-glutamate + ATP = gamma-L-glutamyl-L-cysteine + ADP + phosphate + H(+). It participates in sulfur metabolism; glutathione biosynthesis; glutathione from L-cysteine and L-glutamate: step 1/2. The protein is Glutamate--cysteine ligase of Pseudomonas syringae pv. syringae (strain B728a).